Here is a 320-residue protein sequence, read N- to C-terminus: Aspartate carbamoyltransferase catalytic subunit (320 aa).

Positions 53 and 54 each coordinate carbamoyl phosphate. An L-aspartate-binding site is contributed by lysine 82. Arginine 103, histidine 131, and glutamine 134 together coordinate carbamoyl phosphate. The L-aspartate site is built by arginine 164 and arginine 227. Positions 266 and 267 each coordinate carbamoyl phosphate.

Belongs to the aspartate/ornithine carbamoyltransferase superfamily. ATCase family. Heterododecamer (2C3:3R2) of six catalytic PyrB chains organized as two trimers (C3), and six regulatory PyrI chains organized as three dimers (R2).

The enzyme catalyses carbamoyl phosphate + L-aspartate = N-carbamoyl-L-aspartate + phosphate + H(+). Its pathway is pyrimidine metabolism; UMP biosynthesis via de novo pathway; (S)-dihydroorotate from bicarbonate: step 2/3. Catalyzes the condensation of carbamoyl phosphate and aspartate to form carbamoyl aspartate and inorganic phosphate, the committed step in the de novo pyrimidine nucleotide biosynthesis pathway. The sequence is that of Aspartate carbamoyltransferase catalytic subunit from Bifidobacterium adolescentis (strain ATCC 15703 / DSM 20083 / NCTC 11814 / E194a).